A 300-amino-acid polypeptide reads, in one-letter code: Acetyl-coenzyme A carboxylase carboxyl transferase subunit beta (300 aa).

One can recognise a CoA carboxyltransferase N-terminal domain in the interval 24–293 (LWTNCESCSQ…NAPGAALGGA (270 aa)). Zn(2+) is bound by residues Cys-28, Cys-31, Cys-47, and Cys-50. The C4-type zinc finger occupies 28 to 50 (CESCSQMILVKDLQKAMNVCPHC).

This sequence belongs to the AccD/PCCB family. As to quaternary structure, acetyl-CoA carboxylase is a heterohexamer composed of biotin carboxyl carrier protein (AccB), biotin carboxylase (AccC) and two subunits each of ACCase subunit alpha (AccA) and ACCase subunit beta (AccD). Zn(2+) is required as a cofactor.

It is found in the cytoplasm. It catalyses the reaction N(6)-carboxybiotinyl-L-lysyl-[protein] + acetyl-CoA = N(6)-biotinyl-L-lysyl-[protein] + malonyl-CoA. The protein operates within lipid metabolism; malonyl-CoA biosynthesis; malonyl-CoA from acetyl-CoA: step 1/1. Functionally, component of the acetyl coenzyme A carboxylase (ACC) complex. Biotin carboxylase (BC) catalyzes the carboxylation of biotin on its carrier protein (BCCP) and then the CO(2) group is transferred by the transcarboxylase to acetyl-CoA to form malonyl-CoA. The polypeptide is Acetyl-coenzyme A carboxylase carboxyl transferase subunit beta (Gluconacetobacter diazotrophicus (strain ATCC 49037 / DSM 5601 / CCUG 37298 / CIP 103539 / LMG 7603 / PAl5)).